The following is a 369-amino-acid chain: Homoserine O-succinyltransferase (369 aa).

Residues 90–93 (GISA) are important for substrate specificity. Residues 107 to 353 (WWSGAVGVRA…YGHDAFLKED (247 aa)) form the AB hydrolase-1 domain. The Nucleophile role is filled by serine 175. Substrate is bound at residue arginine 236. Active-site residues include aspartate 316 and histidine 346. Aspartate 347 contacts substrate.

Belongs to the AB hydrolase superfamily. MetX family. As to quaternary structure, homodimer.

The protein localises to the cytoplasm. It catalyses the reaction L-homoserine + succinyl-CoA = O-succinyl-L-homoserine + CoA. It functions in the pathway amino-acid biosynthesis; L-methionine biosynthesis via de novo pathway; O-succinyl-L-homoserine from L-homoserine: step 1/1. Functionally, transfers a succinyl group from succinyl-CoA to L-homoserine, forming succinyl-L-homoserine. The polypeptide is Homoserine O-succinyltransferase (Brevundimonas diminuta (strain ATCC 11568 / DSM 7234 / NBRC 12697 / NCIMB 9393 / NCTC 8545)).